The following is a 196-amino-acid chain: tRNA (pseudouridine(54)-N(1))-methyltransferase (196 aa).

An S-adenosyl-L-methionine-binding site is contributed by Leu126.

It belongs to the methyltransferase superfamily. TrmY family. As to quaternary structure, homodimer.

It localises to the cytoplasm. The enzyme catalyses pseudouridine(54) in tRNA + S-adenosyl-L-methionine = N(1)-methylpseudouridine(54) in tRNA + S-adenosyl-L-homocysteine + H(+). Specifically catalyzes the N1-methylation of pseudouridine at position 54 (Psi54) in tRNAs. The polypeptide is tRNA (pseudouridine(54)-N(1))-methyltransferase (Halobacterium salinarum (strain ATCC 700922 / JCM 11081 / NRC-1) (Halobacterium halobium)).